Reading from the N-terminus, the 368-residue chain is ICEBs1 integrase (368 aa).

A Core-binding (CB) domain is found at 61–143; the sequence is VSFPTLISIY…SLSKIFDTAV (83 aa). Positions 164 to 362 constitute a Tyr recombinase domain; it reads KKMKFWRPEE…YPNKQKEMAD (199 aa). Residues Arg201, Lys239, His313, Arg316, and His339 contribute to the active site. Catalysis depends on Tyr349, which acts as the O-(3'-phospho-DNA)-tyrosine intermediate.

Belongs to the 'phage' integrase family.

Functionally, putative integrase that is involved in the insertion of the integrative and conjugative element ICEBs1. Required for the excision of ICEBs1 from the donor cell genome and subsequent integration in the recipient cell genome. Appears not to be transferred through the mating pore. Integration of ICEBs1 involves an attachment site in the chromosome, attB, and a site in the circular form of ICEBs1, attICEBs1. The polypeptide is ICEBs1 integrase (int) (Bacillus subtilis (strain 168)).